The following is a 1036-amino-acid chain: DNA-directed RNA polymerase subunit beta (1036 aa).

It belongs to the RNA polymerase beta chain family. In plastids the minimal PEP RNA polymerase catalytic core is composed of four subunits: alpha, beta, beta', and beta''. When a (nuclear-encoded) sigma factor is associated with the core the holoenzyme is formed, which can initiate transcription.

It localises to the plastid. The protein resides in the chloroplast. It carries out the reaction RNA(n) + a ribonucleoside 5'-triphosphate = RNA(n+1) + diphosphate. Its function is as follows. DNA-dependent RNA polymerase catalyzes the transcription of DNA into RNA using the four ribonucleoside triphosphates as substrates. This chain is DNA-directed RNA polymerase subunit beta, found in Cyanidioschyzon merolae (strain NIES-3377 / 10D) (Unicellular red alga).